The chain runs to 252 residues: UPF0246 protein LJ_0535 (252 aa).

It belongs to the UPF0246 family.

The polypeptide is UPF0246 protein LJ_0535 (Lactobacillus johnsonii (strain CNCM I-12250 / La1 / NCC 533)).